The primary structure comprises 429 residues: Enolase (429 aa).

(2R)-2-phosphoglycerate is bound at residue Gln-167. Glu-209 acts as the Proton donor in catalysis. The Mg(2+) site is built by Asp-246, Glu-289, and Asp-316. Residues Lys-341, Arg-370, Ser-371, and Lys-392 each coordinate (2R)-2-phosphoglycerate. Lys-341 (proton acceptor) is an active-site residue.

This sequence belongs to the enolase family. As to quaternary structure, component of the RNA degradosome, a multiprotein complex involved in RNA processing and mRNA degradation. Mg(2+) serves as cofactor.

The protein localises to the cytoplasm. It is found in the secreted. Its subcellular location is the cell surface. It catalyses the reaction (2R)-2-phosphoglycerate = phosphoenolpyruvate + H2O. The protein operates within carbohydrate degradation; glycolysis; pyruvate from D-glyceraldehyde 3-phosphate: step 4/5. Its function is as follows. Catalyzes the reversible conversion of 2-phosphoglycerate (2-PG) into phosphoenolpyruvate (PEP). It is essential for the degradation of carbohydrates via glycolysis. This chain is Enolase, found in Ectopseudomonas mendocina (strain ymp) (Pseudomonas mendocina).